The sequence spans 497 residues: MRPLYSCNLATKDDIEMAGGVAPAHLEVNVGGYNTEQTIPIVKHQLVKVGRNDKECQLVLTNPSISSVHCVFWCVFFDEDSIPMFYVKDCSLNGTYLNGLLLKRDKTYLLKHCDVIELSQGSEENDIKKTRLVFMINDDLQSSLDPKLLDQMGFLREVDQWEITNRIVGNGTFGHVLITHNSKERDEDVCYHPENYAVKIIKLKPNKFDKEARILLRLDHPNIIKVYHTFCDRNNHLYIFQDLIPGGDLFSYLAKGDCLTSMSETESLLIVFQILQALNYLHDQDIVHRDLKLDNILLCTPEPCTRIVLADFGIAKDLNSNKERMHTVVGTPEYCAPEVGFRANRKAYQSFSRAATLEQRGYDSKCDLWSLGVITHIMLTGISPFYGDGSERSIIQNAKIGKLNFKLKQWDIVSDNAKSFVKDLLQTDVVKRLNSKQGLKHIWIAKHLSQLERLYYKKILCNNEGPKLESINSDWKRKLPKSVIISQAIPKKKKVLE.

The region spanning 47–102 (VKVGRNDKECQLVLTNPSISSVHCVFWCVFFDEDSIPMFYVKDCSLNGTYLNGLLL) is the FHA domain. Residues 162 to 444 (EITNRIVGNG…SKQGLKHIWI (283 aa)) enclose the Protein kinase domain. ATP is bound by residues 168–176 (VGNGTFGHV) and Lys-199. The active-site Proton acceptor is the Asp-290.

Belongs to the protein kinase superfamily. CAMK Ser/Thr protein kinase family. CHEK2 subfamily.

The enzyme catalyses L-seryl-[protein] + ATP = O-phospho-L-seryl-[protein] + ADP + H(+). The catalysed reaction is L-threonyl-[protein] + ATP = O-phospho-L-threonyl-[protein] + ADP + H(+). Its function is as follows. Probable protein kinase required for meiotic recombination. The polypeptide is Meiosis-specific serine/threonine-protein kinase MEK1 (MEK1) (Saccharomyces cerevisiae (strain ATCC 204508 / S288c) (Baker's yeast)).